The chain runs to 30 residues: XTLSEPEPTCSIEYFRYQAIEDCEYSISVK.

Ca(2+) is required as a cofactor.

It localises to the secreted. Fibrino(geno)lytic activity inhibited by EDTA but not by PMSF, E-64, 6-AHA and aprotinin. Cleaves fibrinogen Aalpha (FGA), gamma (FGG) and Bbeta (FGB) chains. Degrades cross-linked fibrin. Has no amidolytic, plasminogenolytic or caseinolytic activity. Inhibits platelet aggregation induced by collagen (IC(50)=7.5ug/ml) and various other agonists, presumably via activation of a nitridergic pathway. Inhibition is accompanied by reduced ATP release from and surface expression of SELP and CD63 on platelets as well as increased intracellular levels of Ca(2+), cGMP and nitric oxide synthase activity. In Haementeria depressa (Leech), this protein is Hementerin.